We begin with the raw amino-acid sequence, 486 residues long: Cardiolipin synthase A (486 aa).

The next 2 helical transmembrane spans lie at 3–23 (TFYT…IAGV) and 38–58 (MAWL…YLSV). PLD phosphodiesterase domains lie at 219–246 (MDLR…VDPR) and 399–426 (EGGL…DMRS). Catalysis depends on residues His224, Lys226, Asp231, His404, Lys406, and Asp411.

The protein belongs to the phospholipase D family. Cardiolipin synthase subfamily. ClsA sub-subfamily.

It is found in the cell inner membrane. It carries out the reaction 2 a 1,2-diacyl-sn-glycero-3-phospho-(1'-sn-glycerol) = a cardiolipin + glycerol. Functionally, catalyzes the reversible phosphatidyl group transfer from one phosphatidylglycerol molecule to another to form cardiolipin (CL) (diphosphatidylglycerol) and glycerol. In Salmonella gallinarum (strain 287/91 / NCTC 13346), this protein is Cardiolipin synthase A.